Here is a 913-residue protein sequence, read N- to C-terminus: ER degradation-enhancing alpha-mannosidase-like protein 3 (913 aa).

Residues Met1–Trp15 form the signal peptide. Asn104 carries an N-linked (GlcNAc...) asparagine glycan. Residue Glu132 is the Proton donor of the active site. Asn181 carries an N-linked (GlcNAc...) asparagine glycan. Residue Asp279 is part of the active site. Glu373 functions as the Proton donor in the catalytic mechanism. Glu391 is an active-site residue. Thr477 contributes to the Ca(2+) binding site. N-linked (GlcNAc...) asparagine glycosylation occurs at Asn497. The PA domain occupies Leu660–Ile766. The N-linked (GlcNAc...) asparagine glycan is linked to Asn797. The disordered stretch occupies residues Glu823–Leu895. Residues Pro826 to Ser839 show a composition bias toward low complexity. Residues Arg843 to Lys866 are compositionally biased toward basic and acidic residues. The short motif at Lys910–Leu913 is the Prevents secretion from ER element.

The protein belongs to the glycosyl hydrolase 47 family. Ca(2+) serves as cofactor.

Its subcellular location is the endoplasmic reticulum lumen. The enzyme catalyses N(4)-(alpha-D-Man-(1-&gt;2)-alpha-D-Man-(1-&gt;2)-alpha-D-Man-(1-&gt;3)-[alpha-D-Man-(1-&gt;2)-alpha-D-Man-(1-&gt;3)-[alpha-D-Man-(1-&gt;2)-alpha-D-Man-(1-&gt;6)]-alpha-D-Man-(1-&gt;6)]-beta-D-Man-(1-&gt;4)-beta-D-GlcNAc-(1-&gt;4)-beta-D-GlcNAc)-L-asparaginyl-[protein] (N-glucan mannose isomer 9A1,2,3B1,2,3) + 4 H2O = N(4)-(alpha-D-Man-(1-&gt;3)-[alpha-D-Man-(1-&gt;3)-[alpha-D-Man-(1-&gt;6)]-alpha-D-Man-(1-&gt;6)]-beta-D-Man-(1-&gt;4)-beta-D-GlcNAc-(1-&gt;4)-beta-D-GlcNAc)-L-asparaginyl-[protein] (N-glucan mannose isomer 5A1,2) + 4 beta-D-mannose. It catalyses the reaction N(4)-(alpha-D-Man-(1-&gt;2)-alpha-D-Man-(1-&gt;2)-alpha-D-Man-(1-&gt;3)-[alpha-D-Man-(1-&gt;3)-[alpha-D-Man-(1-&gt;2)-alpha-D-Man-(1-&gt;6)]-alpha-D-Man-(1-&gt;6)]-beta-D-Man-(1-&gt;4)-beta-D-GlcNAc-(1-&gt;4)-beta-D-GlcNAc)-L-asparaginyl-[protein] (N-glucan mannose isomer 8A1,2,3B1,3) + 3 H2O = N(4)-(alpha-D-Man-(1-&gt;3)-[alpha-D-Man-(1-&gt;3)-[alpha-D-Man-(1-&gt;6)]-alpha-D-Man-(1-&gt;6)]-beta-D-Man-(1-&gt;4)-beta-D-GlcNAc-(1-&gt;4)-beta-D-GlcNAc)-L-asparaginyl-[protein] (N-glucan mannose isomer 5A1,2) + 3 beta-D-mannose. The protein operates within protein modification; protein glycosylation. Its function is as follows. May be involved in endoplasmic reticulum-associated degradation (ERAD). The chain is ER degradation-enhancing alpha-mannosidase-like protein 3 (edem3) from Xenopus laevis (African clawed frog).